We begin with the raw amino-acid sequence, 1430 residues long: Caskin-1 (1430 aa).

ANK repeat units follow at residues 48–77 (DGFSALHHAALNGNTELISLLLEAQAAVDI), 81–110 (KGMRPLHYAAWQGRKEPMKLVLKAGSAVNV), 114–143 (EGHIPLHLAAQHGHYDVSEMLLQHQSNPCI), 147–176 (SGKTPLDLACEFGRVGVVQLLLSSNMCAAL), 188–217 (NGTSPLHLAAKNGHIDIIRLLLQAGIDINR), and 220–249 (KSGTALHEAALCGKTEVVRLLLDSGINAQV). A Phosphotyrosine modification is found at Tyr253. The region spanning 281–347 (SAALQVRATK…PSSLGEAIVK (67 aa)) is the SH3 domain. A disordered region spans residues 348–372 (RAGSRTGSEPSPPQGGGSLGPSAPP). Residue Ser358 is modified to Phosphoserine. The segment at 375–471 (IWVLRKPFAG…PKKLESSSAS (97 aa)) is CASK-binding. Arg398 is subject to Omega-N-methylarginine. Residues 421–430 (QKSVSESSPG) show a composition bias toward polar residues. The disordered stretch occupies residues 421–472 (QKSVSESSPGDSPVKPPEGSSGAARSQPPAAHAGQVYGEQPPKKLESSSASE). Ser423 and Ser432 each carry phosphoserine. SAM domains lie at 474-537 (KSAE…LNIP) and 543-607 (HKPA…LAEL). 2 positions are modified to phosphoserine: Ser635 and Ser648. The segment covering 667–679 (LSGPAEAGAAAAE) has biased composition (low complexity). 4 disordered regions span residues 667–1001 (LSGP…SAGS), 1015–1040 (GGGGRAIRRPPEGHPTPRPASPDPGR), 1055–1371 (GPDG…RQKL), and 1388–1407 (KIRQEDGQGPRPSSIEEKST). Over residues 683-711 (NHLPATPRTTSRQESSLSGRARHMSSSQE) the composition is skewed to polar residues. A phosphoserine mark is found at Ser722 and Ser727. The residue at position 740 (Thr740) is a Phosphothreonine. Ser790 bears the Phosphoserine mark. Over residues 847-859 (PPAPGPVPPPVPA) the composition is skewed to pro residues. Ser890, Ser892, and Ser988 each carry phosphoserine. Over residues 1027–1036 (GHPTPRPASP) the composition is skewed to pro residues. Thr1066 is subject to Phosphothreonine. Ser1068 is modified (phosphoserine). The segment covering 1147 to 1159 (DTVKRRPKAKEPD) has biased composition (basic and acidic residues). Residues 1190-1214 (PELPPPPPPAEPPPTDLMPLPPLPL) show a composition bias toward pro residues. Position 1258 is a phosphoserine (Ser1258). The residue at position 1267 (Thr1267) is a Phosphothreonine. The span at 1267–1282 (TPPPVSPKPPPPPTAP) shows a compositional bias: pro residues. Composition is skewed to low complexity over residues 1283–1298 (KPAKALAGLQSSSATP), 1308–1326 (PPAALIKPASSPPSQSASP), and 1344–1358 (PRAAASVVSGPPVAS). Ser1362 is subject to Phosphoserine. Basic and acidic residues predominate over residues 1388 to 1406 (KIRQEDGQGPRPSSIEEKS).

Polymerizes, via the tandem SAM domains, to form long, 8 nM wide fibers, upon which other proteins can assemble. Binds the CaM kinase domain of CASK. Forms a ternary complex with CASK and LIN7A, LIN7B or LIN7C. Competes with APBA1 that forms a similar complex with CASK and LIN7 proteins. The tripartite complex CASKIN1/CASK/LIN7(A/B/C) binds the cytoplasmic tail of NRXN1. Expressed in brain. Localized primarily to the neuropil and enriched in synaptic areas (at protein level).

The protein resides in the cytoplasm. Functionally, may link the scaffolding protein CASK to downstream intracellular effectors. The protein is Caskin-1 (Caskin1) of Rattus norvegicus (Rat).